The sequence spans 254 residues: Sensory rhodopsin (254 aa).

Over 1–4 (MTGA) the chain is Extracellular. Residues 5–26 (VTSAYWLAAVAFLIGVGITAAL) traverse the membrane as a helical segment. Over 27 to 35 (YAKLEGSRA) the chain is Cytoplasmic. A helical membrane pass occupies residues 36–57 (RTRLAALAVIPGFAGLSYVGMA). Residues 58 to 71 (LGIGTVTVNGAELV) are Extracellular-facing. The helical transmembrane segment at 72-93 (GLRYVDWVVTTPLLVGFIGYNA) threads the bilayer. Over 94-96 (GAS) the chain is Cytoplasmic. Residues 97–119 (RRAIAGVMIADALMIVFGAAAVV) traverse the membrane as a helical segment. Residues 120 to 123 (SGGT) lie on the Extracellular side of the membrane. Residues 124 to 151 (LKWALFGVSALFHVSLFAYLYVIFPGGI) form a helical membrane-spanning segment. The Cytoplasmic portion of the chain corresponds to 152-154 (PDD). The chain crosses the membrane as a helical span at residues 155 to 182 (PMQRGLFSLLKNHVGLLWLAYPFVWLMG). The Extracellular segment spans residues 183-190 (PAGIGFTG). A helical membrane pass occupies residues 191–223 (AVGAALTYAFLDVLAKVPYVYFFYARRQAFIDV). K206 carries the N6-(retinylidene)lysine modification. The Cytoplasmic segment spans residues 224–254 (TDSRAAAKGDGPAVGGEAPVATGDDAPTAAD). Residues 231–254 (KGDGPAVGGEAPVATGDDAPTAAD) form a disordered region.

It belongs to the archaeal/bacterial/fungal opsin family.

It is found in the cell membrane. In terms of biological role, involved in the control of phototaxis. In Halorubrum sodomense, this protein is Sensory rhodopsin (sop).